Reading from the N-terminus, the 470-residue chain is MMLFVWTTGLLLLATARGNEVCYSHLGCFSDEKPWAGTLQRPVKSLPASPESINTRFLLYTNENPNNYQLITATDPATIKASNFNLHRKTRFVIHGFIDNGEKDWLTDICKRMFQVEKVNCICVDWQGGSLAIYSQAVQNIRVVGAEVAYLVQVLSDQLGYKPGNVHMIGHSLGAHTAAEAGRRLKGLVGRITGLDPAEPCFQDTPEEVRLDPSDAMFVDVIHTDIAPIIPSFGFGMSQKVGHMDFFPNGGKEMPGCEKNIISTIVDVNGFLEGITSLAACNHMRSYQYYSSSILNPDGFLGYPCASYEEFQKDGCFPCPAEGCPKMGHYADQFQGKANGVEKTYFLNTGDSDNFPRWRYKVSVTLSGEKELSGDIKIALFGRNGNSKQYEIFKGSLKPDARYTHDIDVDLNVGEIQKVKFLWHNNGINLLQPKLGASQITVQSGEYGTKYNFCSSNTVQEDVLQSLSPC.

Residues 1-18 form the signal peptide; that stretch reads MMLFVWTTGLLLLATARG. Residues cysteine 22 and cysteine 28 are joined by a disulfide bond. Positions 94–106 are required for galactolipase activity; that stretch reads IHGFIDNGEKDWL. A disulfide bridge connects residues cysteine 110 and cysteine 121. The active-site Nucleophile is the serine 172. The active-site Charge relay system is the aspartate 196. Ca(2+)-binding residues include glutamate 207, arginine 210, aspartate 212, and aspartate 215. A disulfide bond links cysteine 257 and cysteine 281. The required for galactolipase activity stretch occupies residues 258 to 280; sequence EKNIISTIVDVNGFLEGITSLAA. Histidine 283 functions as the Charge relay system in the catalytic mechanism. Cystine bridges form between cysteine 305–cysteine 316 and cysteine 319–cysteine 324. N-linked (GlcNAc...) asparagine glycans are attached at residues asparagine 354 and asparagine 429. The PLAT domain occupies 358–470; the sequence is WRYKVSVTLS…EDVLQSLSPC (113 aa). Residues cysteine 454 and cysteine 470 are joined by a disulfide bond.

It belongs to the AB hydrolase superfamily. Lipase family. In terms of tissue distribution, pancreas.

The protein resides in the secreted. The protein localises to the zymogen granule membrane. It localises to the cell projection. Its subcellular location is the neuron projection. It carries out the reaction a triacylglycerol + H2O = a diacylglycerol + a fatty acid + H(+). It catalyses the reaction a 1,2-diacyl-3-O-(beta-D-galactosyl)-sn-glycerol + 2 H2O = 3-beta-D-galactosyl-sn-glycerol + 2 a fatty acid + 2 H(+). The enzyme catalyses 1,2,3-tri-(9Z-octadecenoyl)-glycerol + H2O = di-(9Z)-octadecenoylglycerol + (9Z)-octadecenoate + H(+). The catalysed reaction is di-(9Z)-octadecenoylglycerol + H2O = (9Z-octadecenoyl)-glycerol + (9Z)-octadecenoate + H(+). It carries out the reaction (9Z-octadecenoyl)-glycerol + H2O = glycerol + (9Z)-octadecenoate + H(+). It catalyses the reaction 1-(9Z-octadecenoyl)-glycerol + H2O = glycerol + (9Z)-octadecenoate + H(+). The enzyme catalyses 1,2,3-tripropanoylglycerol + H2O = dipropanoylglycerol + propanoate + H(+). The catalysed reaction is 1,2,3-tributanoylglycerol + H2O = dibutanoylglycerol + butanoate + H(+). It carries out the reaction 1,2,3-trioctanoylglycerol + H2O = dioctanoylglycerol + octanoate + H(+). It catalyses the reaction 1,2-didecanoylglycerol + H2O = decanoylglycerol + decanoate + H(+). The enzyme catalyses long chain 1,2-diacyl-3-O-beta-D-galactosyl-sn-glycerol + H2O = long chain acyl-3-O-beta-D-galactosyl-sn-glycerol + a fatty acid + H(+). The catalysed reaction is 1,2-dioctanoyl-3-O-beta-D-galactosyl-sn-glycerol + H2O = octanoyl-3-(beta-D-galactosyl)-sn-glycerol + octanoate + H(+). It carries out the reaction 1,2-didodecanoyl-3-beta-D-galactosyl-sn-glycerol + H2O = dodecanoyl-3-beta-D-galactosyl-sn-glycerol + dodecanoate + H(+). It catalyses the reaction 1-beta-D-galactosyl-2,3-didodecanoyl-sn-glycerol + H2O = 1-beta-D-galactosyl-dodecanoyl-sn-glycerol + dodecanoate + H(+). The enzyme catalyses a 1,2-diacyl-3-O-[alpha-D-galactosyl-(1-&gt;6)-beta-D-galactosyl]-sn-glycerol + H2O = acyl-3-O-[alpha-D-galactosyl-(1-&gt;6)-beta-D-galactosyl]-sn-glycerol + a fatty acid + H(+). The catalysed reaction is long chain 1,2-diacyl-3-O-[alpha-D-galactosyl-(1-&gt;6)-beta-D-galactosyl]-sn-glycerol + H2O = long chain acyl-3-O-[alpha-D-galactosyl-(1-&gt;6)-beta-D-galactosyl]-sn-glycerol + a fatty acid + H(+). It carries out the reaction 1,2-dioctanoyl-3-O-[alpha-D-galactosyl-(1-&gt;6)-beta-D-galactosyl]-sn-glycerol + H2O = octanoyl-3-O-[alpha-D-galactosyl-(1-&gt;6)-beta-D-galactosyl]-sn-glycerol + octanoate + H(+). It catalyses the reaction 1,2-didodecanoyl-3-O-[alpha-D-galactosyl-(1-&gt;6)-beta-D-galactosyl]-sn-glycerol + H2O = dodecanoyl-3-O-[alpha-D-galactosyl-(1-&gt;6)-beta-D-galactosyl]-sn-glycerol + dodecanoate + H(+). The enzyme catalyses a 1,2-diacyl-sn-glycero-3-phosphocholine + H2O = a monoacyl-sn-glycero-3-phosphocholine + a fatty acid + H(+). The protein operates within glycerolipid metabolism; triacylglycerol degradation. It functions in the pathway glycolipid metabolism. With respect to regulation, triacylglycerol lipase activity is inhibited by increasing bile salts concentrations and not reactivated by CLPS. Its function is as follows. Lipase that primarily hydrolyzes triglycerides and galactosylglycerides. In neonates, may play a major role in pancreatic digestion of dietary fats such as milk fat globules enriched in long-chain triglycerides. Hydrolyzes short-, medium- and long-chain fatty acyls in triglycerides without apparent positional specificity. Can completely deacylate triacylglycerols. When the liver matures and bile salt synthesis increases, likely functions mainly as a galactolipase and monoacylglycerol lipase. Hydrolyzes monogalactosyldiglycerols (MGDG) and digalactosyldiacylglycerols (DGDG) present in a plant-based diet, releasing long-chain polyunsaturated fatty acids. Hydrolyzes medium- and long-chain fatty acyls in galactolipids. May act together with LIPF to hydrolyze partially digested triglycerides. Hydrolyzes long-chain monoglycerides with high efficiency. In cytotoxic T cells, contributes to perforin-dependent cell lysis, but is unlikely to mediate direct cytotoxicity. Also has low phospholipase activity. In neurons, required for the localization of the phospholipid 1-oleoyl-2-palmitoyl-PC (OPPC) to neurite tips through acyl chain remodeling of membrane phospholipids. The resulting OPPC-rich lipid membrane domain recruits the t-SNARE protein STX4 by selectively interacting with the STX4 transmembrane domain and this promotes surface expression of the dopamine transporter SLC6A3/DAT at neurite tips by facilitating fusion of SLC6A3-containing transport vesicles with the plasma membrane. The sequence is that of Pancreatic lipase-related protein 2 from Myocastor coypus (Coypu).